Reading from the N-terminus, the 321-residue chain is L-carnitine dehydrogenase (321 aa).

An NAD(+)-binding site is contributed by Gly-14 to Gly-19.

This sequence belongs to the 3-hydroxyacyl-CoA dehydrogenase family. L-carnitine dehydrogenase subfamily. Homodimer.

Its subcellular location is the cytoplasm. The enzyme catalyses carnitine + NAD(+) = 3-dehydrocarnitine + NADH + H(+). It participates in amine and polyamine metabolism; carnitine metabolism. Its function is as follows. Catalyzes the NAD(+)-dependent oxidation of L-carnitine to 3-dehydrocarnitine. The sequence is that of L-carnitine dehydrogenase from Burkholderia mallei (strain ATCC 23344).